Reading from the N-terminus, the 1017-residue chain is uncharacterized protein (1017 aa).

Residues 1–34 (MGNLTMSRRTFVKTAAITGAAAAAFGASTHTALA) constitute a signal peptide (tat-type signal). Residues 45–103 (DTVAVKTCCRGCGKMECGVKVIVQNGRAIRVEGDEGAFQSMGNCCTKSQSSIQAAYHPD) enclose the 4Fe-4S Mo/W bis-MGD-type domain. Positions 53, 56, 61, and 89 each coordinate [4Fe-4S] cluster. Lys91 serves as the catalytic Electron donor/acceptor.

This sequence belongs to the prokaryotic molybdopterin-containing oxidoreductase family. It depends on [4Fe-4S] cluster as a cofactor. The cofactor is Mo-bis(molybdopterin guanine dinucleotide). Post-translationally, predicted to be exported by the Tat system. The position of the signal peptide cleavage has not been experimentally proven.

This is an uncharacterized protein from Eggerthella lenta (strain ATCC 25559 / DSM 2243 / CCUG 17323 / JCM 9979 / KCTC 3265 / NCTC 11813 / VPI 0255 / 1899 B) (Eubacterium lentum).